The primary structure comprises 246 residues: Octanoyltransferase (246 aa).

The region spanning 54–240 (DPPPEAVWLL…CLEPNADAAI (187 aa)) is the BPL/LPL catalytic domain. Substrate is bound by residues 96–103 (RGGEVTHH), 163–165 (AIG), and 176–178 (GVA). Catalysis depends on cysteine 194, which acts as the Acyl-thioester intermediate.

It belongs to the LipB family.

It is found in the cytoplasm. The enzyme catalyses octanoyl-[ACP] + L-lysyl-[protein] = N(6)-octanoyl-L-lysyl-[protein] + holo-[ACP] + H(+). It participates in protein modification; protein lipoylation via endogenous pathway; protein N(6)-(lipoyl)lysine from octanoyl-[acyl-carrier-protein]: step 1/2. Functionally, catalyzes the transfer of endogenously produced octanoic acid from octanoyl-acyl-carrier-protein onto the lipoyl domains of lipoate-dependent enzymes. Lipoyl-ACP can also act as a substrate although octanoyl-ACP is likely to be the physiological substrate. This chain is Octanoyltransferase, found in Synechococcus sp. (strain WH7803).